Consider the following 90-residue polypeptide: Acylphosphatase (90 aa).

An Acylphosphatase-like domain is found at glutamine 3–tyrosine 90. Catalysis depends on residues arginine 18 and asparagine 36.

The protein belongs to the acylphosphatase family.

The enzyme catalyses an acyl phosphate + H2O = a carboxylate + phosphate + H(+). In Bacillus velezensis (strain DSM 23117 / BGSC 10A6 / LMG 26770 / FZB42) (Bacillus amyloliquefaciens subsp. plantarum), this protein is Acylphosphatase (acyP).